Here is a 171-residue protein sequence, read N- to C-terminus: S-ribosylhomocysteine lyase (171 aa).

Residues His-54, His-58, and Cys-128 each contribute to the Fe cation site.

Belongs to the LuxS family. In terms of assembly, homodimer. Fe cation serves as cofactor.

It carries out the reaction S-(5-deoxy-D-ribos-5-yl)-L-homocysteine = (S)-4,5-dihydroxypentane-2,3-dione + L-homocysteine. Functionally, involved in the synthesis of autoinducer 2 (AI-2) which is secreted by bacteria and is used to communicate both the cell density and the metabolic potential of the environment. The regulation of gene expression in response to changes in cell density is called quorum sensing. Catalyzes the transformation of S-ribosylhomocysteine (RHC) to homocysteine (HC) and 4,5-dihydroxy-2,3-pentadione (DPD). This is S-ribosylhomocysteine lyase from Cronobacter sakazakii (strain ATCC BAA-894) (Enterobacter sakazakii).